The following is a 244-amino-acid chain: Geranylgeranylglyceryl phosphate synthase (244 aa).

2 residues coordinate Mg(2+): Asp-20 and Ser-49. Residues 169–175 (YLEAGSG), 200–201 (GG), and 222–223 (GT) each bind sn-glycerol 1-phosphate.

It belongs to the GGGP/HepGP synthase family. Group II subfamily. Mg(2+) serves as cofactor.

Its subcellular location is the cytoplasm. It carries out the reaction sn-glycerol 1-phosphate + (2E,6E,10E)-geranylgeranyl diphosphate = sn-3-O-(geranylgeranyl)glycerol 1-phosphate + diphosphate. It functions in the pathway membrane lipid metabolism; glycerophospholipid metabolism. Prenyltransferase that catalyzes the transfer of the geranylgeranyl moiety of geranylgeranyl diphosphate (GGPP) to the C3 hydroxyl of sn-glycerol-1-phosphate (G1P). This reaction is the first ether-bond-formation step in the biosynthesis of archaeal membrane lipids. The sequence is that of Geranylgeranylglyceryl phosphate synthase from Korarchaeum cryptofilum (strain OPF8).